The chain runs to 482 residues: MVRVRFAPSPTGQLHIGGARTALFNYLFAKKHNGKFILRIEDTDLERSREEWAKAIMKSLKWLGIEWDEGPDIGGEFGPYFQSQRKDIYMEYINKLLEEGKAYYCFCSQEEIEKEREIAKQNKVSYKYSKKCRNISLEEAKRRIKNGEKAAVRIKAPQDGVTVVHDIIRGDVEFSNDQLDDFIILKSDGNPTYNFVCVVDDYFMKISHVIRAEEHLSNTPKQLIIYQALNLTPPQFAHVPMILAPDRSKLSKRHGATSVEEFFENGYLKEAIVNYLLLLGWSPGEDRTIIGLDEAIEKFELEKVSKNAAIYDVNKLTWINGHYLKEIHIEDLYERMKYFYSKKGIEIERFDKEYVKSALKLVREKVKTLVEVVDASTYFFDDSYEYDQKGVEKYLTPENLNIVKSLLDELKNLEPFSAPEIESLVRKKAESLNVKAANIIHTIRVCISGRTVTPGLFEMMEVLGKKEVVKRIERTCEKFLIK.

Positions 8–18 (PSPTGQLHIGG) match the 'HIGH' region motif. The 'KMSKS' region signature appears at 249-253 (KLSKR). Position 252 (lysine 252) interacts with ATP.

The protein belongs to the class-I aminoacyl-tRNA synthetase family. Glutamate--tRNA ligase type 1 subfamily. As to quaternary structure, monomer.

It localises to the cytoplasm. The enzyme catalyses tRNA(Glu) + L-glutamate + ATP = L-glutamyl-tRNA(Glu) + AMP + diphosphate. Functionally, catalyzes the attachment of glutamate to tRNA(Glu) in a two-step reaction: glutamate is first activated by ATP to form Glu-AMP and then transferred to the acceptor end of tRNA(Glu). This Caldicellulosiruptor saccharolyticus (strain ATCC 43494 / DSM 8903 / Tp8T 6331) protein is Glutamate--tRNA ligase 2.